The following is a 545-amino-acid chain: Hydroxylamine reductase (545 aa).

[4Fe-4S] cluster contacts are provided by cysteine 3, cysteine 6, cysteine 15, and cysteine 21. Hybrid [4Fe-2O-2S] cluster-binding residues include histidine 240, glutamate 264, cysteine 309, cysteine 401, cysteine 429, cysteine 454, glutamate 488, and lysine 490. Cysteine 401 carries the cysteine persulfide modification.

The protein belongs to the HCP family. It depends on [4Fe-4S] cluster as a cofactor. Requires hybrid [4Fe-2O-2S] cluster as cofactor.

The protein localises to the cytoplasm. The enzyme catalyses A + NH4(+) + H2O = hydroxylamine + AH2 + H(+). In terms of biological role, catalyzes the reduction of hydroxylamine to form NH(3) and H(2)O. The protein is Hydroxylamine reductase of Rippkaea orientalis (strain PCC 8801 / RF-1) (Cyanothece sp. (strain PCC 8801)).